The primary structure comprises 202 residues: Na(+)-translocating NADH-quinone reductase subunit E (202 aa).

6 helical membrane passes run 11 to 31 (AIFV…FLAI), 35 to 55 (IEAA…TVPV), 81 to 101 (FLGL…MEMV), 114 to 134 (GVFL…LFMV), 144 to 164 (LVYG…LAGI), and 180 to 200 (LGIT…FSGI).

This sequence belongs to the NqrDE/RnfAE family. As to quaternary structure, composed of six subunits; NqrA, NqrB, NqrC, NqrD, NqrE and NqrF.

It is found in the cell inner membrane. The catalysed reaction is a ubiquinone + n Na(+)(in) + NADH + H(+) = a ubiquinol + n Na(+)(out) + NAD(+). Its function is as follows. NQR complex catalyzes the reduction of ubiquinone-1 to ubiquinol by two successive reactions, coupled with the transport of Na(+) ions from the cytoplasm to the periplasm. NqrA to NqrE are probably involved in the second step, the conversion of ubisemiquinone to ubiquinol. In Marinobacter nauticus (strain ATCC 700491 / DSM 11845 / VT8) (Marinobacter aquaeolei), this protein is Na(+)-translocating NADH-quinone reductase subunit E.